Here is a 177-residue protein sequence, read N- to C-terminus: Isopentenyl-diphosphate Delta-isomerase (177 aa).

Mn(2+) is bound by residues H22 and H28. The Nudix hydrolase domain maps to 26-160 (LRHMAISVFV…PERFTPWLRI (135 aa)). Residue C62 is part of the active site. Residue H64 coordinates Mn(2+). E82 contributes to the Mg(2+) binding site. E108 and E110 together coordinate Mn(2+). E110 is a catalytic residue.

This sequence belongs to the IPP isomerase type 1 family. It depends on Mg(2+) as a cofactor. Mn(2+) is required as a cofactor.

The protein resides in the cytoplasm. The enzyme catalyses isopentenyl diphosphate = dimethylallyl diphosphate. It participates in isoprenoid biosynthesis; dimethylallyl diphosphate biosynthesis; dimethylallyl diphosphate from isopentenyl diphosphate: step 1/1. The protein operates within porphyrin-containing compound metabolism; chlorophyll biosynthesis. In terms of biological role, catalyzes the 1,3-allylic rearrangement of the homoallylic substrate isopentenyl (IPP) to its highly electrophilic allylic isomer, dimethylallyl diphosphate (DMAPP). The sequence is that of Isopentenyl-diphosphate Delta-isomerase from Cereibacter sphaeroides (strain KD131 / KCTC 12085) (Rhodobacter sphaeroides).